We begin with the raw amino-acid sequence, 198 residues long: Translation machinery-associated protein 22 (198 aa).

An SUI1 domain is found at 100–171; the sequence is IIIKRSERTK…EIVEMIRQQV (72 aa).

The protein belongs to the DENR family. Interacts with the 40S ribosomal subunit.

It is found in the cytoplasm. This Cryptococcus neoformans var. neoformans serotype D (strain B-3501A) (Filobasidiella neoformans) protein is Translation machinery-associated protein 22 (TMA22).